The chain runs to 307 residues: Woronin sorting complex protein (307 aa).

Transmembrane regions (helical) follow at residues Met106–Leu125, Asn146–Ala167, and Ala207–Thr227. Positions Gly241 to Ser264 are enriched in basic and acidic residues. The segment at Gly241–Tyr307 is disordered. Low complexity predominate over residues Pro266–Pro278.

The protein belongs to the peroxisomal membrane protein PXMP2/4 family. Self-assembles into detergent-resistant oligomers and forms a complex with hex-1 assemblies.

It is found in the peroxisome membrane. The protein localises to the cell septum. Woronin sorting complex protein involved in both Woronin bodies (WB) formation and inherence. Localizes to large peroxisome membranes where it self-assembles into detergent-resistant oligomers that envelop hex-1 assemblies, producing asymmetrical nascent WBs. These structures are then delivered to the cell cortex, which permits partitioning of the nascent WB and WB inheritance. This is Woronin sorting complex protein from Neurospora crassa (strain ATCC 24698 / 74-OR23-1A / CBS 708.71 / DSM 1257 / FGSC 987).